A 145-amino-acid polypeptide reads, in one-letter code: Large ribosomal subunit protein bL19 (145 aa).

The protein belongs to the bacterial ribosomal protein bL19 family.

This protein is located at the 30S-50S ribosomal subunit interface and may play a role in the structure and function of the aminoacyl-tRNA binding site. This is Large ribosomal subunit protein bL19 from Brucella anthropi (strain ATCC 49188 / DSM 6882 / CCUG 24695 / JCM 21032 / LMG 3331 / NBRC 15819 / NCTC 12168 / Alc 37) (Ochrobactrum anthropi).